We begin with the raw amino-acid sequence, 151 residues long: MPHRSRDKKGRSRSVRPAHPTVPTWIQYTPEEVEQLVVELARRGFQPSQIGLILRDQYGIPLVRPITGKKLTKILEEHGIKYELPEDLLNLIRRALRIRKHLEEHPKDMASRRGLQLVESKIHRLVKYYKRVGKLPPDFVYNPQALSHLAT.

Positions 1–16 (MPHRSRDKKGRSRSVR) are enriched in basic residues. The interval 1–20 (MPHRSRDKKGRSRSVRPAHP) is disordered.

The protein belongs to the universal ribosomal protein uS15 family. Part of the 30S ribosomal subunit.

The chain is Small ribosomal subunit protein uS15 from Pyrobaculum aerophilum (strain ATCC 51768 / DSM 7523 / JCM 9630 / CIP 104966 / NBRC 100827 / IM2).